Consider the following 282-residue polypeptide: Homeobox protein vex1 (282 aa).

The homeobox DNA-binding region spans 129-188; it reads ASRARTKFTAEQLEELEKSFKENRYIGSSEKRRLSKVLKLSENQIKTWFQNRRMKFKRQT.

It localises to the nucleus. Its function is as follows. Transcriptional repressor. Acts in a ventral signaling pathway downstream of bmp4 to antagonize the Spemann organizer and ventrally pattern the embryonic mesoderm. Represses transcription of the dorsal genes gsc and otx2. The polypeptide is Homeobox protein vex1 (Xenopus tropicalis (Western clawed frog)).